The chain runs to 144 residues: Small ribosomal subunit protein bS6 (144 aa).

The disordered stretch occupies residues 95–144 (ELEEGPSAMMQSKSRDDRPRRGEGDDRPRRDDREDRPRRDREPRRMEGGE). The segment covering 107–144 (KSRDDRPRRGEGDDRPRRDDREDRPRRDREPRRMEGGE) has biased composition (basic and acidic residues).

It belongs to the bacterial ribosomal protein bS6 family.

Binds together with bS18 to 16S ribosomal RNA. In Paramagnetospirillum magneticum (strain ATCC 700264 / AMB-1) (Magnetospirillum magneticum), this protein is Small ribosomal subunit protein bS6.